Here is a 220-residue protein sequence, read N- to C-terminus: MSLGLVGRKVGMTRVFTDDGDSIPVTVLEVGGNRVTQIKTDETDGYTAVQVTFGTRRASRVTKPLAGHLAKAGVEAGEIIVEFRIDATKAAELKLGDTIDVDLFSVDQKIDVQGTTIGKGYAGTIKRYHFSSGRASHGNSRSHNVPGSIGMAQDPGRVFPGKRMTGHMGDVTRTVQNLVIVRIDAERKLLLVKGAVPGAKSGFVVVSPAVKAKPQVAAAA.

The interval 132–153 (SGRASHGNSRSHNVPGSIGMAQ) is disordered. Positions 133 to 145 (GRASHGNSRSHNV) are enriched in polar residues. An N5-methylglutamine modification is found at glutamine 153.

Belongs to the universal ribosomal protein uL3 family. Part of the 50S ribosomal subunit. Forms a cluster with proteins L14 and L19. Methylated by PrmB.

In terms of biological role, one of the primary rRNA binding proteins, it binds directly near the 3'-end of the 23S rRNA, where it nucleates assembly of the 50S subunit. This chain is Large ribosomal subunit protein uL3, found in Ralstonia nicotianae (strain ATCC BAA-1114 / GMI1000) (Ralstonia solanacearum).